The sequence spans 85 residues: U4-theraphotoxin-Hhn1w (85 aa).

The signal sequence occupies residues 1 to 22 (MKVTLIAILTCAAVLALHTTAA). Positions 23 to 48 (EELEAESQLMEVGMPDTELAAVDEER) are excised as a propeptide. 3 cysteine pairs are disulfide-bonded: Cys-52-Cys-66, Cys-56-Cys-77, and Cys-71-Cys-82.

It belongs to the neurotoxin 12 (Hwtx-2) family. 02 (Hwtx-2) subfamily. Expressed by the venom gland.

It localises to the secreted. Postsynaptic neurotoxin. This Cyriopagopus hainanus (Chinese bird spider) protein is U4-theraphotoxin-Hhn1w.